We begin with the raw amino-acid sequence, 406 residues long: Glucose-6-phosphate isomerase (406 aa).

Glutamate 259 functions as the Proton donor in the catalytic mechanism. Catalysis depends on residues histidine 284 and lysine 397.

This sequence belongs to the GPI family.

It is found in the cytoplasm. It carries out the reaction alpha-D-glucose 6-phosphate = beta-D-fructose 6-phosphate. The protein operates within carbohydrate biosynthesis; gluconeogenesis. It functions in the pathway carbohydrate degradation; glycolysis; D-glyceraldehyde 3-phosphate and glycerone phosphate from D-glucose: step 2/4. In terms of biological role, catalyzes the reversible isomerization of glucose-6-phosphate to fructose-6-phosphate. The chain is Glucose-6-phosphate isomerase from Campylobacter jejuni subsp. jejuni serotype O:2 (strain ATCC 700819 / NCTC 11168).